We begin with the raw amino-acid sequence, 483 residues long: Matrix metalloproteinase-20 (483 aa).

The first 22 residues, 1 to 22 (MKVLPASGLAVFLIMALKFSTA), serve as a signal peptide directing secretion. A propeptide spanning residues 23–107 (APSLVAASPR…PRCGVPDVAN (85 aa)) is cleaved from the precursor. Residues 98-105 (PRCGVPDV) carry the Cysteine switch motif. Residue cysteine 100 coordinates Zn(2+). Ca(2+) is bound by residues glutamate 164, alanine 165, and aspartate 166. Positions 176 and 178 each coordinate Zn(2+). Positions 183, 184, 186, and 188 each coordinate Ca(2+). Residue histidine 191 participates in Zn(2+) binding. The Ca(2+) site is built by glutamate 197, glycine 198, glycine 200, and aspartate 202. Histidine 204 contributes to the Zn(2+) binding site. Residues aspartate 206 and glutamate 209 each contribute to the Ca(2+) site. A Zn(2+)-binding site is contributed by histidine 226. The active site involves glutamate 227. 2 residues coordinate Zn(2+): histidine 230 and histidine 236. 4 Hemopexin repeats span residues 293 to 343 (PDLC…FPQL), 344 to 389 (MSNV…GFPR), 391 to 439 (VQQI…FSGV), and 440 to 483 (NGQI…WIGC). An intrachain disulfide couples cysteine 296 to cysteine 483.

The protein belongs to the peptidase M10A family. Zn(2+) is required as a cofactor. Ca(2+) serves as cofactor. Post-translationally, autoactivates at least at the 107-Asn-|-Tyr-108 site. In terms of tissue distribution, expressed specifically in the enamel organ.

Its subcellular location is the secreted. The protein resides in the extracellular space. It is found in the extracellular matrix. Its function is as follows. Degrades amelogenin, the major protein component of the enamel matrix and two of the macromolecules characterizing the cartilage extracellular matrix: aggrecan and the cartilage oligomeric matrix protein (COMP). May play a central role in tooth enamel formation. Cleaves aggrecan at the '360-Asn-|-Phe-361' site. This is Matrix metalloproteinase-20 (MMP20) from Homo sapiens (Human).